A 167-amino-acid polypeptide reads, in one-letter code: Mitochondrial inner membrane protease subunit 1 (167 aa).

Residues Ser-40 and Lys-83 contribute to the active site.

It belongs to the peptidase S26 family. IMP1 subfamily. In terms of assembly, heterodimer of 2 subunits, IMMPL1 and IMMPL2.

It is found in the mitochondrion inner membrane. Catalyzes the removal of transit peptides required for the targeting of proteins from the mitochondrial matrix, across the inner membrane, into the inter-membrane space. This is Mitochondrial inner membrane protease subunit 1 (immp1l) from Xenopus tropicalis (Western clawed frog).